Here is a 79-residue protein sequence, read N- to C-terminus: D-alanyl carrier protein (79 aa).

The Carrier domain maps to 1 to 77 (MDTKQAVLDI…KIIAKVESLR (77 aa)). Serine 35 bears the O-(pantetheine 4'-phosphoryl)serine mark.

It belongs to the DltC family. 4'-phosphopantetheine is transferred from CoA to a specific serine of apo-DCP.

The protein resides in the cytoplasm. It participates in cell wall biogenesis; lipoteichoic acid biosynthesis. In terms of biological role, carrier protein involved in the D-alanylation of lipoteichoic acid (LTA). The loading of thioester-linked D-alanine onto DltC is catalyzed by D-alanine--D-alanyl carrier protein ligase DltA. The DltC-carried D-alanyl group is further transferred to cell membrane phosphatidylglycerol (PG) by forming an ester bond, probably catalyzed by DltD. D-alanylation of LTA plays an important role in modulating the properties of the cell wall in Gram-positive bacteria, influencing the net charge of the cell wall. The sequence is that of D-alanyl carrier protein from Lactobacillus gasseri (strain ATCC 33323 / DSM 20243 / BCRC 14619 / CIP 102991 / JCM 1131 / KCTC 3163 / NCIMB 11718 / NCTC 13722 / AM63).